Reading from the N-terminus, the 273-residue chain is Undecaprenyl-diphosphatase (273 aa).

Transmembrane regions (helical) follow at residues 3–23 (IIELIKALILGLVEGATEFAP), 48–68 (GANTFKVVIQLGSVLAAVVVF), 89–109 (LTLMHIFVGLLPAGVLGVLFE), 116–136 (LFSTKTVLIGLVLGALLMIAA), 151–171 (ITYKQAFIVGLVQCLSLWPGF), 192–212 (ADFTFIMAVPIMAGASAISLL), 225–245 (FFVVGFISAFVFALLAIRFFL), and 253–273 (LVPFAIYRIVLAAVIYVVYFA).

The protein belongs to the UppP family.

The protein localises to the cell membrane. It catalyses the reaction di-trans,octa-cis-undecaprenyl diphosphate + H2O = di-trans,octa-cis-undecaprenyl phosphate + phosphate + H(+). In terms of biological role, catalyzes the dephosphorylation of undecaprenyl diphosphate (UPP). Confers resistance to bacitracin. The polypeptide is Undecaprenyl-diphosphatase (Anoxybacillus flavithermus (strain DSM 21510 / WK1)).